The primary structure comprises 355 residues: Chorismate synthase (355 aa).

Arg48 is a binding site for NADP(+). Residues 125–127 (RSS), 238–239 (NA), Gly278, 293–297 (KPASS), and Arg319 contribute to the FMN site.

Belongs to the chorismate synthase family. In terms of assembly, homotetramer. FMNH2 serves as cofactor.

It carries out the reaction 5-O-(1-carboxyvinyl)-3-phosphoshikimate = chorismate + phosphate. It functions in the pathway metabolic intermediate biosynthesis; chorismate biosynthesis; chorismate from D-erythrose 4-phosphate and phosphoenolpyruvate: step 7/7. Its function is as follows. Catalyzes the anti-1,4-elimination of the C-3 phosphate and the C-6 proR hydrogen from 5-enolpyruvylshikimate-3-phosphate (EPSP) to yield chorismate, which is the branch point compound that serves as the starting substrate for the three terminal pathways of aromatic amino acid biosynthesis. This reaction introduces a second double bond into the aromatic ring system. The chain is Chorismate synthase from Baumannia cicadellinicola subsp. Homalodisca coagulata.